Reading from the N-terminus, the 1029-residue chain is Endosome/lysosome-associated apoptosis and autophagy regulator family member 2 (1029 aa).

Positions 1 to 47 are cleaved as a signal peptide; that stretch reads MLFRARGPVRGRGWGRPAEAPRRGRSPPWSPAWICCWALAGCQAAWA. Topologically, residues 48–929 are extracellular; it reads GDLPSSSSRP…TCETVDFWLK (882 aa). Asn-169 is a glycosylation site (N-linked (GlcNAc...) asparagine). 3 disulfide bridges follow: Cys-293–Cys-310, Cys-323–Cys-346, and Cys-326–Cys-358. N-linked (GlcNAc...) asparagine glycans are attached at residues Asn-405 and Asn-691. An MRH domain is found at 672 to 877; that stretch reads SDCFFYHEKE…LWESAEACPL (206 aa). 4 cysteine pairs are disulfide-bonded: Cys-674–Cys-720, Cys-730–Cys-758, Cys-827–Cys-863, and Cys-839–Cys-875. A helical membrane pass occupies residues 930–950; the sequence is VGAGVGAFTAVLLVALTCYFW. The Cytoplasmic portion of the chain corresponds to 951–1029; it reads KKNQKLEYKY…QLKTSRSPNI (79 aa). Phosphoserine is present on Ser-1018.

It belongs to the ELAPOR family.

It localises to the cell membrane. Functionally, functions as a regulator of the BMP signaling pathway and may be involved in epidermal differentiation. The protein is Endosome/lysosome-associated apoptosis and autophagy regulator family member 2 of Homo sapiens (Human).